Here is a 459-residue protein sequence, read N- to C-terminus: ATP-dependent protease ATPase subunit HslU (459 aa).

ATP is bound by residues valine 26, 68 to 73 (GVGKTE), aspartate 271, glutamate 337, and arginine 409.

This sequence belongs to the ClpX chaperone family. HslU subfamily. In terms of assembly, a double ring-shaped homohexamer of HslV is capped on each side by a ring-shaped HslU homohexamer. The assembly of the HslU/HslV complex is dependent on binding of ATP.

The protein localises to the cytoplasm. In terms of biological role, ATPase subunit of a proteasome-like degradation complex; this subunit has chaperone activity. The binding of ATP and its subsequent hydrolysis by HslU are essential for unfolding of protein substrates subsequently hydrolyzed by HslV. HslU recognizes the N-terminal part of its protein substrates and unfolds these before they are guided to HslV for hydrolysis. The chain is ATP-dependent protease ATPase subunit HslU from Xylella fastidiosa (strain M23).